The sequence spans 533 residues: Tyrosine decarboxylase (533 aa).

The tract at residues 1–22 (MAPPSHCHTINGGAPRNGAIPE) is disordered. Pyridoxal 5'-phosphate contacts are provided by threonine 281 and asparagine 336. Residue lysine 339 is modified to N6-(pyridoxal phosphate)lysine.

This sequence belongs to the group II decarboxylase family. Requires pyridoxal 5'-phosphate as cofactor.

It carries out the reaction L-tyrosine + H(+) = tyramine + CO2. Catalyzes the decarboxylation of L-tyrosine to tyramine, which can be converted to the hydroxycinnamic acid amides feruloyltyramine and 4-coumaroyltyramine. Possesses low tryptophan decarboxylase activity. The chain is Tyrosine decarboxylase from Oryza sativa subsp. japonica (Rice).